Reading from the N-terminus, the 838-residue chain is Protein translocase subunit SecA (838 aa).

Residues Gln-86, 104 to 108 (GEGKT), and Asp-493 each bind ATP. A disordered region spans residues 793 to 838 (NTQAVSGGEDSGKKKTKKPVVKSNTVKRNDPCPCGSGKKYKNCHGQ). Residues Cys-824, Cys-826, Cys-835, and His-836 each coordinate Zn(2+).

This sequence belongs to the SecA family. As to quaternary structure, monomer and homodimer. Part of the essential Sec protein translocation apparatus which comprises SecA, SecYEG and auxiliary proteins SecDF. Other proteins may also be involved. Requires Zn(2+) as cofactor.

The protein resides in the cell membrane. The protein localises to the cytoplasm. It carries out the reaction ATP + H2O + cellular proteinSide 1 = ADP + phosphate + cellular proteinSide 2.. Its function is as follows. Part of the Sec protein translocase complex. Interacts with the SecYEG preprotein conducting channel. Has a central role in coupling the hydrolysis of ATP to the transfer of proteins into and across the cell membrane, serving as an ATP-driven molecular motor driving the stepwise translocation of polypeptide chains across the membrane. This is Protein translocase subunit SecA from Oceanobacillus iheyensis (strain DSM 14371 / CIP 107618 / JCM 11309 / KCTC 3954 / HTE831).